Reading from the N-terminus, the 467-residue chain is DNA repair protein RadA (467 aa).

The C4-type zinc finger occupies Cys10 to Cys27. ATP is bound at residue Gly98–Ser105. The RadA KNRFG motif signature appears at Lys260–Gly264. Residues Asp359 to Lys467 form a lon-protease-like region.

This sequence belongs to the RecA family. RadA subfamily.

In terms of biological role, DNA-dependent ATPase involved in processing of recombination intermediates, plays a role in repairing DNA breaks. Stimulates the branch migration of RecA-mediated strand transfer reactions, allowing the 3' invading strand to extend heteroduplex DNA faster. Binds ssDNA in the presence of ADP but not other nucleotides, has ATPase activity that is stimulated by ssDNA and various branched DNA structures, but inhibited by SSB. Does not have RecA's homology-searching function. This is DNA repair protein RadA from Brucella abortus (strain 2308).